The primary structure comprises 609 residues: Mitogen-activated protein kinase kinase kinase 3 (609 aa).

Residues 1 to 202 (MPTWWGRKSC…SAVHGSRIGG (202 aa)) are disordered. A compositionally biased stretch (basic and acidic residues) spans 11–28 (KNKDDNHRGIISTDRDIK). Low complexity-rich tracts occupy residues 40-64 (PTRG…GFDS) and 90-108 (VSGS…SSGS). In terms of domain architecture, Protein kinase spans 214–470 (WKKGKFLGSG…ASQLLEHPFL (257 aa)). ATP contacts are provided by residues 220 to 228 (LGSGTFGQV) and Lys-243. Residue Asp-339 is the Proton acceptor of the active site. 2 disordered regions span residues 487-511 (PRSY…SHDN) and 590-609 (MEPS…SRLV). Over residues 594–609 (SFRTQTPNSPLRSRLV) the composition is skewed to polar residues.

Belongs to the protein kinase superfamily. STE Ser/Thr protein kinase family. MAP kinase kinase kinase subfamily. As to quaternary structure, interacts with PBL27. In terms of tissue distribution, expressed in flower buds, roots, leaves, seedlings, stems and immature siliques. Absent of mature pollen.

It carries out the reaction L-seryl-[protein] + ATP = O-phospho-L-seryl-[protein] + ADP + H(+). The catalysed reaction is L-threonyl-[protein] + ATP = O-phospho-L-threonyl-[protein] + ADP + H(+). In Arabidopsis thaliana (Mouse-ear cress), this protein is Mitogen-activated protein kinase kinase kinase 3.